A 368-amino-acid polypeptide reads, in one-letter code: Probable endopolygalacturonase A (368 aa).

An N-terminal signal peptide occupies residues 1–18 (MRSVKLFGLAALGSLGAA). The propeptide occupies 19–31 (APAPSRVSDLTKR). C35 and C50 are disulfide-bonded. PbH1 repeat units follow at residues 140-162 (LEDS…SVQA), 167-192 (LIDI…DISE), 193-214 (STGV…AINS), 215-235 (GENI…SIGS), 244-265 (VKNV…RIKT), 273-295 (VSQV…VIEQ), and 307-352 (TTGV…DITG). D207 (proton donor) is an active-site residue. C209 and C225 form a disulfide bridge. Residue H229 is part of the active site. N-linked (GlcNAc...) asparagine glycosylation occurs at N246. 2 disulfides stabilise this stretch: C335–C340 and C359–C368.

It belongs to the glycosyl hydrolase 28 family.

The protein localises to the secreted. The catalysed reaction is (1,4-alpha-D-galacturonosyl)n+m + H2O = (1,4-alpha-D-galacturonosyl)n + (1,4-alpha-D-galacturonosyl)m.. Functionally, involved in maceration and soft-rotting of plant tissue. Hydrolyzes the 1,4-alpha glycosidic bonds of de-esterified pectate in the smooth region of the plant cell wall. The chain is Probable endopolygalacturonase A (pgaA) from Aspergillus fumigatus (strain CBS 144.89 / FGSC A1163 / CEA10) (Neosartorya fumigata).